A 622-amino-acid polypeptide reads, in one-letter code: Apical membrane antigen 1 (622 aa).

Positions Met-1–Gly-24 are cleaved as a signal peptide. The Extracellular segment spans residues Gln-25 to Lys-546. 5 disulfide bridges follow: Cys-149–Cys-302, Cys-217–Cys-247, Cys-263–Cys-275, Cys-320–Cys-418, and Cys-337–Cys-409. N-linked (GlcNAc...) asparagine glycosylation occurs at Asn-162. 5 N-linked (GlcNAc...) asparagine glycosylation sites follow: Asn-286, Asn-371, Asn-421, Asn-422, and Asn-499. Cystine bridges form between Cys-443–Cys-502, Cys-490–Cys-507, and Cys-492–Cys-509. Residues Ile-547–Tyr-567 form a helical membrane-spanning segment. At Lys-568 to Tyr-622 the chain is on the cytoplasmic side. The segment at Asp-577–Lys-607 is disordered.

This sequence belongs to the apicomplexan parasites AMA1 family.

Its subcellular location is the membrane. Functionally, involved in parasite invasion of erythrocytes. This is Apical membrane antigen 1 (AMA-1) from Plasmodium falciparum (isolate 7G8).